A 288-amino-acid chain; its full sequence is MDAELAEVRALQAEIAALRRACEDPPAPWEEKSRVQKSFQAIHQFNLEGWKSSKDLKNQLGHLESELSFLSTLTGINIRNHSKQTEDLTSTEMTEKSIRKVLQRHRLSGNCHMVTFQLEFQILEIQNKERLSSAVTDLNIIMEPTECSELSEFVSRAEERKDLFMFFRSLHFFVEWFEYRKRTFKHLKEKYPDAVYLSEGPSSCSMGIRSASRPGFELVIVWRIQIDEDGKVFPKLDLLTKVPQRALELDKNRAIETAPLSFRTLVGLLGIEAALESLIKSLCAEENN.

Residues 1-71 (MDAELAEVRA…HLESELSFLS (71 aa)) are a coiled coil. A Phosphoserine modification is found at Ser-38.

Belongs to the CENP-P/CTF19 family. Component of the CENPA-CAD complex, composed of CENPI, CENPK, CENPL, CENPO, CENPP, CENPQ, CENPR and CENPS. The CENPA-CAD complex interacts with the CENPA-NAC complex, at least composed of CENPA, CENPC, CENPH, CENPM, CENPN, CENPT and CENPU.

The protein localises to the nucleus. It localises to the chromosome. Its subcellular location is the centromere. Its function is as follows. Component of the CENPA-CAD (nucleosome distal) complex, a complex recruited to centromeres which is involved in assembly of kinetochore proteins, mitotic progression and chromosome segregation. May be involved in incorporation of newly synthesized CENPA into centromeres via its interaction with the CENPA-NAC complex. The sequence is that of Centromere protein P (CENPP) from Homo sapiens (Human).